Consider the following 144-residue polypeptide: TSC22 domain family protein 1 (144 aa).

The interval 77–98 (LKEQIKELIEKNSQLEQENNLL) is leucine-zipper. The interval 109 to 144 (QFQAQLQTGSPPATTQPQGSTQPPAQPASQGSGPTA) is disordered.

Belongs to the TSC-22/Dip/Bun family. Forms homodimers. Forms a heterodimer with TSC22D4/THG1. Interacts with histone H1-2. Interacts with GNL3.

It is found in the cytoplasm. The protein localises to the nucleus. The protein resides in the mitochondrion. Its function is as follows. Transcriptional repressor. Plays a role in the repression of hematopoietic precursor cell growth. Promotes IL2 deprivation-induced apoptosis in T-lymphocytes, via repression of TSC22D3/GILZ transcription and activation of the caspase cascade. Positively regulates cell death in response to TGFB3 during mammary gland involution. The chain is TSC22 domain family protein 1 from Bathyergus suillus (Cape dune mole rat).